We begin with the raw amino-acid sequence, 304 residues long: Insulin-like growth factor-binding protein 2 (304 aa).

Residues 1-34 form the signal peptide; that stretch reads MLPRLGGPALPLLLPSLLLLLLLGAGGCGPGVRA. The region spanning 36-118 is the IGFBP N-terminal domain; it reads VLFRCPPCTP…VTGAGTCEKR (83 aa). Cystine bridges form between C40–C68, C43–C70, C51–C71, C59–C74, C82–C95, C89–C115, C206–C240, C251–C262, and C264–C285. Residues 203-285 enclose the Thyroglobulin type-1 domain; that stretch reads RTPCQQELDQ…APTIRGDPEC (83 aa). The Cell attachment site motif lies at 280 to 282; sequence RGD.

In terms of assembly, interacts with IGF1. Interacts with IGF2. Interacts (via RGD motif) with integrin alpha5/ITGA5; this interaction induces cell migration, adhesion or apoptosis according to the context. Interacts with PTPRB; this interaction leads to PTPRB dimerization and inactivation. Post-translationally, cleaved by MMP9 leading to release of free IGF2 from IGFBP2-IGF2 complex, which contributes to enhance the motility and the growth of astrocytes. In terms of processing, O-glycosylated. In terms of tissue distribution, in adults, expressed in brain, testes, ovaries, and kidney. Expression in the adult liver is barely detectable.

The protein resides in the secreted. Its function is as follows. Multifunctional protein that plays a critical role in regulating the availability of IGFs such as IGF1 and IGF2 to their receptors and thereby regulates IGF-mediated cellular processes including proliferation, differentiation, and apoptosis in a cell-type specific manner. Functions coordinately with receptor protein tyrosine phosphatase beta/PTPRB and the IGF1 receptor to regulate IGF1-mediated signaling by stimulating the phosphorylation of PTEN leading to its inactivation and AKT1 activation. Plays a positive role in cell migration via interaction with integrin alpha5/ITGA5 through an RGD motif. Additionally, interaction with ITGA5/ITGB1 enhances the adhesion of endothelial progenitor cells to endothelial cells. Upon mitochondrial damage, facilitates apoptosis with ITGA5 of podocytes, and then activates the phosphorylation of focal adhesion kinase (FAK)-mediated mitochondrial injury. In Rattus norvegicus (Rat), this protein is Insulin-like growth factor-binding protein 2 (Igfbp2).